Here is a 353-residue protein sequence, read N- to C-terminus: Fe(3+) ions import ATP-binding protein FbpC (353 aa).

In terms of domain architecture, ABC transporter spans V9–M239. G41 to T48 lines the ATP pocket.

Belongs to the ABC transporter superfamily. Fe(3+) ion importer (TC 3.A.1.10) family. The complex is composed of two ATP-binding proteins (FbpC), two transmembrane proteins (FbpB) and a solute-binding protein (FbpA).

The protein localises to the cell inner membrane. It catalyses the reaction Fe(3+)(out) + ATP + H2O = Fe(3+)(in) + ADP + phosphate + H(+). In terms of biological role, part of the ABC transporter complex FbpABC involved in Fe(3+) ions import. Responsible for energy coupling to the transport system. This is Fe(3+) ions import ATP-binding protein FbpC from Agrobacterium fabrum (strain C58 / ATCC 33970) (Agrobacterium tumefaciens (strain C58)).